The sequence spans 310 residues: Small ribosomal subunit protein uS2 (310 aa).

2 disordered regions span residues 213 to 240 (EEQA…GGAA) and 271 to 310 (WDSV…TDWA). Over residues 216-227 (AALARQQEEANA) the composition is skewed to low complexity. The span at 297–310 (VTMQEQAKPSTDWA) shows a compositional bias: polar residues.

This sequence belongs to the universal ribosomal protein uS2 family. Component of the small ribosomal subunit. Mature ribosomes consist of a small (40S) and a large (60S) subunit. The 40S subunit contains about 33 different proteins and 1 molecule of RNA (18S). The 60S subunit contains about 49 different proteins and 3 molecules of RNA (28S, 5.8S and 5S). Interacts with ribosomal protein S21.

It localises to the cytoplasm. Its function is as follows. Required for the assembly and/or stability of the 40S ribosomal subunit. Required for the processing of the 20S rRNA-precursor to mature 18S rRNA in a late step of the maturation of 40S ribosomal subunits. In Nematostella vectensis (Starlet sea anemone), this protein is Small ribosomal subunit protein uS2.